A 507-amino-acid chain; its full sequence is Alkyl hydroperoxide reductase subunit F (507 aa).

Residue 207-222 (DVLIVGGGPASGSAAI) participates in FAD binding. Cys-335 and Cys-338 are disulfide-bonded. 347-361 (DVAVIGGGNSGVEAA) serves as a coordination point for NAD(+). 467 to 477 (TNVPGIFAAGD) is an FAD binding site.

The protein belongs to the class-II pyridine nucleotide-disulfide oxidoreductase family. Homodimer. Requires FAD as cofactor.

In terms of biological role, serves to protect the cell against DNA damage by alkyl hydroperoxides. It can use either NADH or NADPH as electron donor for direct reduction of redox dyes or of alkyl hydroperoxides when combined with the AhpC protein. This chain is Alkyl hydroperoxide reductase subunit F (ahpF), found in Staphylococcus aureus (strain NCTC 8325 / PS 47).